The sequence spans 2147 residues: Large tegument protein deneddylase (2147 aa).

The tract at residues 1–233 is deubiquitination activity; that stretch reads MKIVRASRDQ…PDIDASVMSG (233 aa). Residues 3–223 enclose the Peptidase C76 domain; that stretch reads IVRASRDQSA…LVQIMDQYKD (221 aa). Active-site residues include C23, D156, and H158. Disordered regions lie at residues 228-301, 1419-1438, 1567-1589, and 2034-2072; these read ASVM…RSRR, EIGQHKKDPPSTGEEVGLPE, SSSSGGGNGSGASSRQKDQQNAT, and RDPPRLKRASGDSSSSVPAEDRDPDARPQDSVPDQSLSE. A compositionally biased stretch (low complexity) spans 240 to 261; sequence SISSSAASASASVSPLPSGAAS. Residue T292 is a region of interest, interaction with inner tegument protein. Basic and acidic residues predominate over residues 2052–2061; it reads AEDRDPDARP.

Belongs to the herpesviridae large tegument protein family. As to quaternary structure, interacts with host CUL1 and CUL4A; these interactions inhibit the E3 ligase activity of cullins. Interacts with inner tegument protein. Interacts with capsid vertex specific component CVC2. Interacts with the major capsid protein/MCP.

The protein localises to the virion tegument. Its subcellular location is the host cytoplasm. The protein resides in the host nucleus. The enzyme catalyses Thiol-dependent hydrolysis of ester, thioester, amide, peptide and isopeptide bonds formed by the C-terminal Gly of ubiquitin (a 76-residue protein attached to proteins as an intracellular targeting signal).. Its function is as follows. Large tegument protein that plays multiple roles in the viral cycle. During viral entry, remains associated with the capsid while most of the tegument is detached and participates in the capsid transport toward the host nucleus. Plays a role in the routing of the capsid at the nuclear pore complex and subsequent uncoating. Within the host nucleus, acts as a deneddylase and promotes the degradation of nuclear CRLs (cullin-RING ubiquitin ligases) and thereby stabilizes nuclear CRL substrates, while cytoplasmic CRLs remain unaffected. These modifications prevent host cell cycle S-phase progression and create a favorable environment allowing efficient viral genome replication. Participates later in the secondary envelopment of capsids. Indeed, plays a linker role for the association of the outer viral tegument to the capsids together with the inner tegument protein. This is Large tegument protein deneddylase (M48) from Mus musculus (Mouse).